Here is a 229-residue protein sequence, read N- to C-terminus: Ribonuclease 3 (229 aa).

The RNase III domain occupies 5–127 (LARLERKLGY…LIGAIYLDAD (123 aa)). Glu40 contacts Mg(2+). The active site involves Asp44. Residues Asp113 and Glu116 each contribute to the Mg(2+) site. Glu116 is a catalytic residue. The 71-residue stretch at 154–224 (DPKTRLQEFL…AASALIALGV (71 aa)) folds into the DRBM domain.

The protein belongs to the ribonuclease III family. Homodimer. Requires Mg(2+) as cofactor.

Its subcellular location is the cytoplasm. The catalysed reaction is Endonucleolytic cleavage to 5'-phosphomonoester.. Functionally, digests double-stranded RNA. Involved in the processing of primary rRNA transcript to yield the immediate precursors to the large and small rRNAs (23S and 16S). Processes some mRNAs, and tRNAs when they are encoded in the rRNA operon. Processes pre-crRNA and tracrRNA of type II CRISPR loci if present in the organism. This chain is Ribonuclease 3, found in Pseudomonas putida (strain GB-1).